Consider the following 201-residue polypeptide: Small ribosomal subunit protein uS4c (201 aa).

The tract at residues 20-44 (GLTSKRPRAGSDLRNQSRSGKKSQY) is disordered. The S4 RNA-binding domain maps to 89–152 (MRLDNILFRL…NSRTLVQNLL (64 aa)).

It belongs to the universal ribosomal protein uS4 family. As to quaternary structure, part of the 30S ribosomal subunit. Contacts protein S5. The interaction surface between S4 and S5 is involved in control of translational fidelity.

The protein resides in the plastid. It localises to the chloroplast. Its function is as follows. One of the primary rRNA binding proteins, it binds directly to 16S rRNA where it nucleates assembly of the body of the 30S subunit. In terms of biological role, with S5 and S12 plays an important role in translational accuracy. In Arabis hirsuta (Hairy rock-cress), this protein is Small ribosomal subunit protein uS4c (rps4).